The primary structure comprises 329 residues: NADH-quinone oxidoreductase subunit H (329 aa).

Helical transmembrane passes span 9–29, 42–62, 75–95, 117–137, 154–174, 188–208, 238–258, 269–291, and 309–329; these read LIKI…ATYI, GPCY…IKLF, FIFT…MAPI, IGFL…ILAG, IQLL…LMVV, GGFL…FLIA, LKWG…SFVI, WGFI…LSMW, and WKIM…VILI.

It belongs to the complex I subunit 1 family. As to quaternary structure, NDH-1 is composed of 14 different subunits. Subunits NuoA, H, J, K, L, M, N constitute the membrane sector of the complex.

Its subcellular location is the cell inner membrane. It catalyses the reaction a quinone + NADH + 5 H(+)(in) = a quinol + NAD(+) + 4 H(+)(out). Functionally, NDH-1 shuttles electrons from NADH, via FMN and iron-sulfur (Fe-S) centers, to quinones in the respiratory chain. The immediate electron acceptor for the enzyme in this species is believed to be ubiquinone. Couples the redox reaction to proton translocation (for every two electrons transferred, four hydrogen ions are translocated across the cytoplasmic membrane), and thus conserves the redox energy in a proton gradient. This subunit may bind ubiquinone. The chain is NADH-quinone oxidoreductase subunit H from Helicobacter pylori (strain J99 / ATCC 700824) (Campylobacter pylori J99).